The following is a 405-amino-acid chain: Probable tRNA sulfurtransferase (405 aa).

The THUMP domain maps to 60–165; that stretch reads DQVMARLSQV…REAIYLSTKT (106 aa). ATP contacts are provided by residues 183 to 184, 208 to 209, Arg265, Gly287, and Gln296; these read ML and HF.

The protein belongs to the ThiI family.

The protein localises to the cytoplasm. It catalyses the reaction [ThiI sulfur-carrier protein]-S-sulfanyl-L-cysteine + a uridine in tRNA + 2 reduced [2Fe-2S]-[ferredoxin] + ATP + H(+) = [ThiI sulfur-carrier protein]-L-cysteine + a 4-thiouridine in tRNA + 2 oxidized [2Fe-2S]-[ferredoxin] + AMP + diphosphate. The catalysed reaction is [ThiS sulfur-carrier protein]-C-terminal Gly-Gly-AMP + S-sulfanyl-L-cysteinyl-[cysteine desulfurase] + AH2 = [ThiS sulfur-carrier protein]-C-terminal-Gly-aminoethanethioate + L-cysteinyl-[cysteine desulfurase] + A + AMP + 2 H(+). Its pathway is cofactor biosynthesis; thiamine diphosphate biosynthesis. In terms of biological role, catalyzes the ATP-dependent transfer of a sulfur to tRNA to produce 4-thiouridine in position 8 of tRNAs, which functions as a near-UV photosensor. Also catalyzes the transfer of sulfur to the sulfur carrier protein ThiS, forming ThiS-thiocarboxylate. This is a step in the synthesis of thiazole, in the thiamine biosynthesis pathway. The sulfur is donated as persulfide by IscS. The chain is Probable tRNA sulfurtransferase from Lacticaseibacillus casei (strain BL23) (Lactobacillus casei).